The primary structure comprises 307 residues: RHOMBOID-like protein 6, mitochondrial (307 aa).

The N-terminal 62 residues, 1–62 (MRSRDMERGR…DCVAKLLRRF (62 aa)), are a transit peptide targeting the mitochondrion. Transmembrane regions (helical) follow at residues 105 to 125 (WLHAGIIHLVMNMFDVIIFGI), 136 to 156 (IGLIYLISGFGGSILSALFLQ), 159 to 179 (ISVGASGALLGLMGAMLSELL), 191 to 211 (ALLSFLFIIAINLAIGLLPWV), 214 to 234 (FAHIGGLLTGFCLGFILLMQP), and 262 to 282 (LFFVAAVLVVAGLTVGLVMLF). The active-site Nucleophile is the Ser164. The active-site Charge relay system is the His216.

This sequence belongs to the peptidase S54 family.

It is found in the mitochondrion membrane. It carries out the reaction Cleaves type-1 transmembrane domains using a catalytic dyad composed of serine and histidine that are contributed by different transmembrane domains.. Its function is as follows. Probable rhomboid-type serine protease that catalyzes intramembrane proteolysis. Might be involved in response to abiotic stimuli. The sequence is that of RHOMBOID-like protein 6, mitochondrial from Arabidopsis thaliana (Mouse-ear cress).